The sequence spans 393 residues: Protein TsgA (393 aa).

The Cytoplasmic portion of the chain corresponds to 1–10; the sequence is MTNSNRIKLT. Residues 11–31 form a helical membrane-spanning segment; that stretch reads WISFLSYALTGALVIVTGMVM. Over 32-50 the chain is Periplasmic; that stretch reads GNIADYFHLPVSSMSNTFT. A helical transmembrane segment spans residues 51-71; the sequence is FLNAGILISIFLNAWLMEIVP. Topologically, residues 72–77 are cytoplasmic; sequence LKTQLR. Residues 78-98 form a helical membrane-spanning segment; that stretch reads FGFILMVLAVAGLMFSHSLAL. Topologically, residues 99-100 are periplasmic; the sequence is FS. A helical transmembrane segment spans residues 101–121; sequence AAMFVLGLVSGITMSIGTFLI. The Cytoplasmic segment spans residues 122-133; it reads TQLYEGRQRGSR. Residues 134–154 traverse the membrane as a helical segment; the sequence is LLFTDSFFSMAGMIFPMVAAF. The Periplasmic portion of the chain corresponds to 155–161; sequence LLARSIE. A helical membrane pass occupies residues 162 to 182; the sequence is WYWVYACIGLVYLAIFILTFG. Residues 183–205 are Cytoplasmic-facing; it reads CEFPALGKHAQHSQAPVVKEKWG. Residues 206 to 226 form a helical membrane-spanning segment; the sequence is IGVLFLAVAALCYILGQLGFI. The Periplasmic portion of the chain corresponds to 227–244; the sequence is SWVPEYAKGLGMSLNDAG. The chain crosses the membrane as a helical span at residues 245 to 265; sequence ALVSDFWMSYMFGMWAFSFIL. At 266–272 the chain is on the cytoplasmic side; the sequence is RFFDLQR. A helical transmembrane segment spans residues 273–293; sequence ILTVLAGMAAVLMYLFITGTQ. The Periplasmic portion of the chain corresponds to 294–297; that stretch reads AHMP. A helical transmembrane segment spans residues 298-318; the sequence is WFILTLGFFSSAIYTSIITLG. Topologically, residues 319 to 331 are cytoplasmic; that stretch reads SQQTKVASPKLVN. A helical transmembrane segment spans residues 332 to 352; it reads FILTCGTIGTMLTFVVTGPIV. At 353–360 the chain is on the periplasmic side; that stretch reads AHSGPQAA. Residues 361 to 381 traverse the membrane as a helical segment; that stretch reads LLTANGLYAVVFVMCFALGFV. Residues 382–393 lie on the Cytoplasmic side of the membrane; it reads SRHRQHSSPAAH.

It belongs to the major facilitator superfamily. TsgA family.

Its subcellular location is the cell inner membrane. This chain is Protein TsgA, found in Salmonella paratyphi A (strain ATCC 9150 / SARB42).